A 302-amino-acid chain; its full sequence is GATA transcription factor 28 (302 aa).

The segment at 47–66 (NAGGMSEGVETDIPSHPGNV) is disordered. Residues 77-112 (GSEQGDQLTLSFQGQVYVFDSVLPEKVQAVLLLLGG) enclose the Tify domain. The tract at residues 119-141 (APPGLGSPHQNNRVSSLPGTPQR) is disordered. Residues 126–141 (PHQNNRVSSLPGTPQR) show a composition bias toward polar residues. The region spanning 147–189 (RLASLVRFREKRKGRNFDKKIRYTVRKEVALRMQRNKGQFTSA) is the CCT domain. The segment at 217-273 (QHQEISCRHCGIGEKSTPMMRRGPAGPRTLCNACGLMWANKGAFRDLSKASPQTAQN) adopts a GATA-type zinc-finger fold.

The protein belongs to the type IV zinc-finger family. Class C subfamily. Predominantly expressed in shoot apices, inflorescences and roots.

Its subcellular location is the nucleus. In terms of biological role, transcriptional activator that specifically binds 5'-GATA-3' or 5'-GAT-3' motifs within gene promoters. This Arabidopsis thaliana (Mouse-ear cress) protein is GATA transcription factor 28 (GATA28).